The following is a 796-amino-acid chain: DNA damage-responsive transcriptional repressor RPH1 (796 aa).

A JmjN domain is found at 14-55 (VPVFKPTYEQFEDFYAYCKAINKYGMKSGVVKVIPPKEWKDK). One can recognise a JmjC domain in the interval 193-355 (PEGLNVWNVA…IGKKAGKCHC (163 aa)). Position 399 is a phosphothreonine (Thr399). A phosphoserine mark is found at Ser430, Ser459, Ser557, Ser561, Ser575, and Ser584. The Bipartite nuclear localization signal motif lies at 455 to 471 (KRISSFQEQPLNKLLKR). The segment at 599 to 692 (RQQHSQQHSF…DKEQGSSPLN (94 aa)) is disordered. The segment covering 601 to 621 (QHSQQHSFSTPSTVSNLSTSV) has biased composition (polar residues). A compositionally biased stretch (basic and acidic residues) spans 629–640 (NDIKTPHPERPN). Ser652 bears the Phosphoserine mark. The segment covering 654–669 (VETSKSNLILSKVAST) has biased composition (polar residues). A compositionally biased stretch (basic and acidic residues) spans 670–686 (RQEDSFTSRNDDLDKEQ). A Phosphoserine modification is found at Ser689. Residues 709–732 (YICKECQRKFSSGHHLTRHKKSVH) form a C2H2-type 1 zinc finger. Residues 738 to 763 (HSCPKCGKRFKRRDHVLQHLNKKIPC) form a C2H2-type 2; atypical zinc finger. The interval 774–796 (IMNPTVQPQDGKAAINQQSTPLN) is disordered.

In terms of processing, RAD53-dependent phosphorylated in response to DNA damage.

The protein localises to the nucleus. Its function is as follows. Transcriptional repressor of photolyase PHR1. Recognizes and binds the sequence AG(4) in the upstream repressing sequence of PHR1. Derepresses PHR1 transcription when phosphorylated. The sequence is that of DNA damage-responsive transcriptional repressor RPH1 (RPH1) from Saccharomyces cerevisiae (strain ATCC 204508 / S288c) (Baker's yeast).